A 215-amino-acid chain; its full sequence is Protein-L-isoaspartate O-methyltransferase (215 aa).

Ser-62 is an active-site residue.

The protein belongs to the methyltransferase superfamily. L-isoaspartyl/D-aspartyl protein methyltransferase family.

Its subcellular location is the cytoplasm. It catalyses the reaction [protein]-L-isoaspartate + S-adenosyl-L-methionine = [protein]-L-isoaspartate alpha-methyl ester + S-adenosyl-L-homocysteine. Catalyzes the methyl esterification of L-isoaspartyl residues in peptides and proteins that result from spontaneous decomposition of normal L-aspartyl and L-asparaginyl residues. It plays a role in the repair and/or degradation of damaged proteins. This is Protein-L-isoaspartate O-methyltransferase from Bradyrhizobium sp. (strain ORS 278).